A 324-amino-acid chain; its full sequence is Serpentine receptor class delta-30 (324 aa).

Transmembrane regions (helical) follow at residues 5 to 25, 38 to 58, 83 to 103, 124 to 144, 176 to 196, 227 to 247, and 258 to 278; these read IIHS…MYLA, AIIT…FFVM, ACYV…IWMI, VFVA…WFSF, ITLI…YIWI, FQVF…SMFT, and AISV…ILFV. The tract at residues 290–324 is disordered; sequence KQPKPHPEMCGPIRSNTRTTSISVTNNSSHLSSAH. Residues 303–324 show a composition bias toward polar residues; sequence RSNTRTTSISVTNNSSHLSSAH.

Belongs to the nematode receptor-like protein srd family.

It is found in the membrane. The chain is Serpentine receptor class delta-30 (srd-30) from Caenorhabditis elegans.